Consider the following 63-residue polypeptide: Arabinogalactan protein 41 (63 aa).

Residues methionine 1–alanine 27 form the signal peptide. Glutamine 28 bears the Pyrrolidone carboxylic acid mark. Proline 32, proline 34, and proline 36 each carry 4-hydroxyproline. O-linked (Ara...) hydroxyproline glycosylation is found at proline 32, proline 34, and proline 36. Residue serine 38 is the site of GPI-anchor amidated serine attachment. The propeptide at aspartate 39–histidine 63 is removed in mature form.

This sequence belongs to the AG-peptide AGP family. Contains 4-hydroxyproline; hydroxylated on Pro-32, Pro-34 and Pro-36. In terms of processing, O-glycosylated on hydroxyprolines; noncontiguous hydroxylproline residues are glycosylated with arabinogalactan.

It is found in the cell membrane. Proteoglycan that seems to be implicated in diverse developmental roles such as differentiation, cell-cell recognition, embryogenesis and programmed cell death. This chain is Arabinogalactan protein 41, found in Arabidopsis thaliana (Mouse-ear cress).